The chain runs to 356 residues: Thrombomodulin (356 aa).

Topologically, residues 1–296 (RGARGETEGR…SPAPAGPLHS (296 aa)) are extracellular. EGF-like domains lie at 17-57 (GAWA…RSCG) and 60-98 (AEHPCHQLCEHFCHLHGLGNYTCICEAGYQLAADQHRCE). 18 disulfide bridges follow: Cys-21–Cys-32, Cys-28–Cys-41, Cys-43–Cys-56, Cys-64–Cys-72, Cys-68–Cys-82, Cys-84–Cys-97, Cys-103–Cys-114, Cys-110–Cys-123, Cys-125–Cys-136, Cys-143–Cys-152, Cys-148–Cys-162, Cys-164–Cys-178, Cys-182–Cys-191, Cys-187–Cys-199, Cys-201–Cys-213, Cys-219–Cys-228, Cys-224–Cys-237, and Cys-239–Cys-253. Positions 99–137 (DVDDCAQLPSPCPQRCVNTEGGFQCHCDTGYELVDGECV) constitute an EGF-like 3; calcium-binding domain. EGF-like domains lie at 139–179 (PVDP…HKCQ) and 178–214 (CQMFCNQTSCPADCDPHYPTICRCPEGYIIDEGSTCT). The 40-residue stretch at 215 to 254 (DINECDTNICPGQCHNLPGTYECICGPDSALSGQIGIDCD) folds into the EGF-like 6; calcium-binding domain. Positions 255 to 290 (PTQVNEERGTPEDYGGSGEPPVSPTPGATARPSPAP) are disordered. The O-linked (Xyl...) (chondroitin sulfate) serine glycan is linked to Ser-271. A helical membrane pass occupies residues 297–320 (GVLVGISIASLSLVVALLALLCHL). The Cytoplasmic portion of the chain corresponds to 321 to 356 (RKKQGASRGELEYKCGVPAKELMLQQVKTERTPQKL).

As to quaternary structure, interacts with ITGAL, ITGAM and ITGB2. Interacts with thrombin/F2; this interaction switches the specificity of thrombin from a procoagulant to an anticoagulant and antifibrinolytic protease. Interacts with ANGP1 and ANGP2; these interactions significantly inhibit the generation of activated PC and TAFIa/CPB2 by the thrombin/thrombomodulin complex. Interacts with PF4; this interaction enhances generation of activated protein C. Interacts with HMGB1; this interaction inhibits HMGB1 inflammatory activity. In terms of tissue distribution, endothelial cells are unique in synthesizing thrombomodulin.

It is found in the membrane. In terms of biological role, endothelial cell receptor that plays a critical role in regulating several physiological processes including hemostasis, coagulation, fibrinolysis, inflammation, and angiogenesis. Acts as a cofactor for thrombin activation of protein C/PROC on the surface of vascular endothelial cells leading to initiation of the activated protein C anticoagulant pathway. Also accelerates the activation of the plasma carboxypeptidase B2/CPB2, which catalyzes removal of C-terminal basic amino acids from its substrates including kinins or anaphylatoxins leading to fibrinolysis inhibition. Plays critical protective roles in changing the cleavage specificity of protease-activated receptor 1/PAR1, inhibiting endothelial cell permeability and inflammation. Suppresses inflammation distinctly from its anticoagulant cofactor activity by sequestering HMGB1 thereby preventing it from engaging cellular receptors such as RAGE and contributing to the inflammatory response. This is Thrombomodulin (THBD) from Bos taurus (Bovine).